A 204-amino-acid chain; its full sequence is GATA transcription factor 14 (204 aa).

Over residues 57–66 (REFDTNDSKP) the composition is skewed to basic and acidic residues. The disordered stretch occupies residues 57 to 102 (REFDTNDSKPSRNFSNLPTATRGRLHAPKRSGNKRGRQKRLSFKSP). Over residues 79–98 (GRLHAPKRSGNKRGRQKRLS) the composition is skewed to basic residues. The segment at 111 to 165 (GITDKSCSHCGTRKTPLWREGPRGAGTLCNACGMRYRTGRLLPEYRPASSPDFKP) adopts a GATA-type zinc-finger fold. The segment at 180-204 (RERKSSPPNSFGFSESYHSTRKLGF) is disordered. Polar residues predominate over residues 185–196 (SPPNSFGFSESY).

It belongs to the type IV zinc-finger family. Class A subfamily.

Its subcellular location is the nucleus. Its function is as follows. Transcriptional activator that specifically binds 5'-GATA-3' or 5'-GAT-3' motifs within gene promoters. May be involved in the regulation of some light-responsive genes. This Arabidopsis thaliana (Mouse-ear cress) protein is GATA transcription factor 14 (GATA14).